The following is a 448-amino-acid chain: UPF0210 protein Pars_1033 (448 aa).

It belongs to the UPF0210 family.

This Pyrobaculum arsenaticum (strain DSM 13514 / JCM 11321 / PZ6) protein is UPF0210 protein Pars_1033.